A 252-amino-acid chain; its full sequence is Thiazole synthase (252 aa).

Lys95 (schiff-base intermediate with DXP) is an active-site residue. Residues Gly156, 182–183, and 204–205 contribute to the 1-deoxy-D-xylulose 5-phosphate site; these read AG and NT.

The protein belongs to the ThiG family. As to quaternary structure, homotetramer. Forms heterodimers with either ThiH or ThiS.

It is found in the cytoplasm. It catalyses the reaction [ThiS sulfur-carrier protein]-C-terminal-Gly-aminoethanethioate + 2-iminoacetate + 1-deoxy-D-xylulose 5-phosphate = [ThiS sulfur-carrier protein]-C-terminal Gly-Gly + 2-[(2R,5Z)-2-carboxy-4-methylthiazol-5(2H)-ylidene]ethyl phosphate + 2 H2O + H(+). The protein operates within cofactor biosynthesis; thiamine diphosphate biosynthesis. Functionally, catalyzes the rearrangement of 1-deoxy-D-xylulose 5-phosphate (DXP) to produce the thiazole phosphate moiety of thiamine. Sulfur is provided by the thiocarboxylate moiety of the carrier protein ThiS. In vitro, sulfur can be provided by H(2)S. This chain is Thiazole synthase, found in Shewanella sp. (strain ANA-3).